The sequence spans 430 residues: MNVKVENIEKNVVKLEITVDSEKFNEAVKKSFKKNAKRFNVPGFRKGKAPLNIIKKYYGEGVLFEDAINFCCEDTYPKAIEENNIKPVDYPQIDVVQIGEGKDFIYTAEVTTVPEVKLGEYKGVEVKKVSYEVEDEAVENELKSMQEKNARVSLKEEGEIEKGNIAIIDFKGYVDGKAFEGGEAKDYEIEIGSGTFIGDFEDQLVGLKKDESKEVNVSFPEEYGREDLNGKPATFEVTIKDIKVKELPALDDEFAKEVSEFDTLEELKSDIKDRMKKELSEKAKAEYEEAVVEAVGANAEIEIPKVMIEKEIENMVRDLEMRLKYQGLDLKSYYEFTNSSEEKVKEYMRETAEKRVKTDLIMQEIAKVEDIKATEEELKEKAMEVAKQYGQKDVEKTAELIANAQKAYLEIDIVNGKVLDLLVESSKEIA.

Positions 163-248 (GNIAIIDFKG…IKDIKVKELP (86 aa)) constitute a PPIase FKBP-type domain.

It belongs to the FKBP-type PPIase family. Tig subfamily.

Its subcellular location is the cytoplasm. The enzyme catalyses [protein]-peptidylproline (omega=180) = [protein]-peptidylproline (omega=0). Involved in protein export. Acts as a chaperone by maintaining the newly synthesized protein in an open conformation. Functions as a peptidyl-prolyl cis-trans isomerase. In Clostridium botulinum (strain ATCC 19397 / Type A), this protein is Trigger factor.